The chain runs to 91 residues: Mercuric transport protein periplasmic component (91 aa).

Residues 1-19 (MKKLFASLAIAAVVAPVWA) form the signal peptide. The 67-residue stretch at 22 to 88 (QTVTLSVPGM…ATEDAGYPSS (67 aa)) folds into the HMA domain. The Hg(2+) site is built by Cys-33 and Cys-36.

Belongs to the MerP family. As to quaternary structure, monomer.

It localises to the periplasm. Involved in mercury resistance. Acts as a mercury scavenger that specifically binds to a mercuric ion in the periplasm and probably passes it to the cytoplasmic mercuric reductase MerA via the mercuric transport protein MerT. The chain is Mercuric transport protein periplasmic component from Serratia marcescens.